Reading from the N-terminus, the 235-residue chain is Riboflavin kinase (235 aa).

Mg(2+)-binding residues include T45 and N47. Residue E140 is the Nucleophile of the active site.

The protein belongs to the flavokinase family. Zn(2+) serves as cofactor. The cofactor is Mg(2+).

The catalysed reaction is riboflavin + ATP = FMN + ADP + H(+). Its pathway is cofactor biosynthesis; FMN biosynthesis; FMN from riboflavin (ATP route): step 1/1. Its function is as follows. Catalyzes the phosphorylation of riboflavin (vitamin B2) to form flavin mononucleotide (FMN) coenzyme. The polypeptide is Riboflavin kinase (FMN1) (Chaetomium globosum (strain ATCC 6205 / CBS 148.51 / DSM 1962 / NBRC 6347 / NRRL 1970) (Soil fungus)).